Consider the following 219-residue polypeptide: Cytidylate kinase (219 aa).

10-18 serves as a coordination point for ATP; it reads GPAAAGKST.

The protein belongs to the cytidylate kinase family. Type 1 subfamily.

It is found in the cytoplasm. It carries out the reaction CMP + ATP = CDP + ADP. It catalyses the reaction dCMP + ATP = dCDP + ADP. The chain is Cytidylate kinase from Staphylococcus saprophyticus subsp. saprophyticus (strain ATCC 15305 / DSM 20229 / NCIMB 8711 / NCTC 7292 / S-41).